The sequence spans 290 residues: tRNA-cytidine(32) 2-sulfurtransferase (290 aa).

Residues 66–71 (SGGKDS) carry the PP-loop motif motif. 3 residues coordinate [4Fe-4S] cluster: cysteine 141, cysteine 144, and cysteine 232.

The protein belongs to the TtcA family. As to quaternary structure, homodimer. Mg(2+) is required as a cofactor. It depends on [4Fe-4S] cluster as a cofactor.

It localises to the cytoplasm. It catalyses the reaction cytidine(32) in tRNA + S-sulfanyl-L-cysteinyl-[cysteine desulfurase] + AH2 + ATP = 2-thiocytidine(32) in tRNA + L-cysteinyl-[cysteine desulfurase] + A + AMP + diphosphate + H(+). It functions in the pathway tRNA modification. Functionally, catalyzes the ATP-dependent 2-thiolation of cytidine in position 32 of tRNA, to form 2-thiocytidine (s(2)C32). The sulfur atoms are provided by the cysteine/cysteine desulfurase (IscS) system. This is tRNA-cytidine(32) 2-sulfurtransferase from Rhizobium etli (strain ATCC 51251 / DSM 11541 / JCM 21823 / NBRC 15573 / CFN 42).